Here is a 214-residue protein sequence, read N- to C-terminus: 3,4-dihydroxy-2-butanone 4-phosphate synthase (214 aa).

D-ribulose 5-phosphate is bound by residues 37 to 38 (RE), Asp-42, 150 to 154 (RRGHT), and Glu-174. Glu-38 contacts Mg(2+). Residue His-153 coordinates Mg(2+).

This sequence belongs to the DHBP synthase family. As to quaternary structure, homodimer. Mg(2+) serves as cofactor. It depends on Mn(2+) as a cofactor.

It carries out the reaction D-ribulose 5-phosphate = (2S)-2-hydroxy-3-oxobutyl phosphate + formate + H(+). It functions in the pathway cofactor biosynthesis; riboflavin biosynthesis; 2-hydroxy-3-oxobutyl phosphate from D-ribulose 5-phosphate: step 1/1. Its function is as follows. Catalyzes the conversion of D-ribulose 5-phosphate to formate and 3,4-dihydroxy-2-butanone 4-phosphate. In Histophilus somni (strain 2336) (Haemophilus somnus), this protein is 3,4-dihydroxy-2-butanone 4-phosphate synthase.